Reading from the N-terminus, the 1007-residue chain is Serine/threonine-protein kinase atg1 (1007 aa).

In terms of domain architecture, Protein kinase spans 30-336 (YTRLSEIGRG…FDVYFAHKVL (307 aa)). ATP is bound by residues 36-44 (IGRGSFAVV) and Lys59. Asp174 (proton acceptor) is an active-site residue. Disordered regions lie at residues 343–489 (LVAD…KEHA), 524–586 (GGQA…PTSA), 795–817 (RLPS…GSGT), and 878–900 (SRPG…DGGQ). Residues 373-387 (MKRENALSGGVRDEP) are compositionally biased toward basic and acidic residues. The segment covering 396-410 (AMTQSPRPETPSTPM) has biased composition (polar residues). Residues 477 to 489 (KPVEKAKDEKEHA) show a composition bias toward basic and acidic residues. The span at 534 to 555 (SGAAPGTPPAGGSSPHASPSKA) shows a compositional bias: low complexity. Basic and acidic residues predominate over residues 563–579 (SRADSAHVRQNSYDRRY). The span at 805-817 (SNLSVGSSLGSGT) shows a compositional bias: low complexity. The span at 887–896 (DRADARRDNE) shows a compositional bias: basic and acidic residues.

It belongs to the protein kinase superfamily. Ser/Thr protein kinase family. APG1/unc-51/ULK1 subfamily. In terms of assembly, homodimer. Forms a ternary complex with ATG13 and ATG17.

Its subcellular location is the cytoplasm. It localises to the preautophagosomal structure membrane. It catalyses the reaction L-seryl-[protein] + ATP = O-phospho-L-seryl-[protein] + ADP + H(+). It carries out the reaction L-threonyl-[protein] + ATP = O-phospho-L-threonyl-[protein] + ADP + H(+). Its function is as follows. Serine/threonine protein kinase involved in the cytoplasm to vacuole transport (Cvt) and found to be essential in autophagy, where it is required for the formation of autophagosomes. Involved in the clearance of protein aggregates which cannot be efficiently cleared by the proteasome. Required for selective autophagic degradation of the nucleus (nucleophagy) as well as for mitophagy which contributes to regulate mitochondrial quantity and quality by eliminating the mitochondria to a basal level to fulfill cellular energy requirements and preventing excess ROS production. Also involved in endoplasmic reticulum-specific autophagic process, in selective removal of ER-associated degradation (ERAD) substrates. Plays a key role in ATG9 and ATG23 cycling through the pre-autophagosomal structure and is necessary to promote ATG18 binding to ATG9 through phosphorylation of ATG9. Catalyzes phosphorylation of ATG4, decreasing the interaction between ATG4 and ATG8 and impairing deconjugation of PE-conjugated forms of ATG8. In Aspergillus niger (strain ATCC MYA-4892 / CBS 513.88 / FGSC A1513), this protein is Serine/threonine-protein kinase atg1.